The primary structure comprises 374 residues: Chaperone protein DnaJ (374 aa).

Positions 5–70 (DYYKLLGVDR…EKRAGYDRYG (66 aa)) constitute a J domain. Residues 136–214 (GIQAPIHYVT…CNGSGRRRDE (79 aa)) form a CR-type zinc finger. Cys-149, Cys-152, Cys-166, Cys-169, Cys-188, Cys-191, Cys-202, and Cys-205 together coordinate Zn(2+). 4 CXXCXGXG motif repeats span residues 149-156 (CDMCQGRG), 166-173 (CHTCQGSG), 188-195 (CTTCYGEG), and 202-209 (CKKCNGSG).

The protein belongs to the DnaJ family. Homodimer. It depends on Zn(2+) as a cofactor.

The protein resides in the cytoplasm. Functionally, participates actively in the response to hyperosmotic and heat shock by preventing the aggregation of stress-denatured proteins and by disaggregating proteins, also in an autonomous, DnaK-independent fashion. Unfolded proteins bind initially to DnaJ; upon interaction with the DnaJ-bound protein, DnaK hydrolyzes its bound ATP, resulting in the formation of a stable complex. GrpE releases ADP from DnaK; ATP binding to DnaK triggers the release of the substrate protein, thus completing the reaction cycle. Several rounds of ATP-dependent interactions between DnaJ, DnaK and GrpE are required for fully efficient folding. Also involved, together with DnaK and GrpE, in the DNA replication of plasmids through activation of initiation proteins. In Wolbachia sp. subsp. Brugia malayi (strain TRS), this protein is Chaperone protein DnaJ.